A 127-amino-acid chain; its full sequence is Fluoride-specific ion channel FluC (127 aa).

4 consecutive transmembrane segments (helical) span residues 4–24 (LSVL…RYLI), 38–58 (YGTL…IAAF), 71–91 (IIGL…MDNV), and 104–124 (LNVL…FQLL). 2 residues coordinate Na(+): glycine 78 and threonine 81.

It belongs to the fluoride channel Fluc/FEX (TC 1.A.43) family.

It localises to the cell inner membrane. It carries out the reaction fluoride(in) = fluoride(out). Its activity is regulated as follows. Na(+) is not transported, but it plays an essential structural role and its presence is essential for fluoride channel function. Fluoride-specific ion channel. Important for reducing fluoride concentration in the cell, thus reducing its toxicity. The sequence is that of Fluoride-specific ion channel FluC from Vibrio campbellii (strain ATCC BAA-1116).